The sequence spans 248 residues: Uridylate kinase (248 aa).

Residue 13–16 coordinates ATP; sequence KLSG. UMP is bound at residue glycine 55. Residues glycine 56 and arginine 60 each coordinate ATP. UMP-binding positions include aspartate 75 and 136–143; that span reads TGNPYFTT. The ATP site is built by threonine 163, tyrosine 169, and aspartate 172.

The protein belongs to the UMP kinase family. Homohexamer.

The protein resides in the cytoplasm. It catalyses the reaction UMP + ATP = UDP + ADP. Its pathway is pyrimidine metabolism; CTP biosynthesis via de novo pathway; UDP from UMP (UMPK route): step 1/1. Inhibited by UTP. In terms of biological role, catalyzes the reversible phosphorylation of UMP to UDP. The chain is Uridylate kinase from Leptospira interrogans serogroup Icterohaemorrhagiae serovar copenhageni (strain Fiocruz L1-130).